A 29-amino-acid polypeptide reads, in one-letter code: Cytochrome b6-f complex subunit 8 (29 aa).

The helical transmembrane segment at 3-23 (IVSLGWAFLMVVFSFSLSLVV) threads the bilayer.

This sequence belongs to the PetN family. In terms of assembly, the 4 large subunits of the cytochrome b6-f complex are cytochrome b6, subunit IV (17 kDa polypeptide, PetD), cytochrome f and the Rieske protein, while the 4 small subunits are PetG, PetL, PetM and PetN. The complex functions as a dimer.

Its subcellular location is the plastid. The protein resides in the chloroplast thylakoid membrane. Its function is as follows. Component of the cytochrome b6-f complex, which mediates electron transfer between photosystem II (PSII) and photosystem I (PSI), cyclic electron flow around PSI, and state transitions. This chain is Cytochrome b6-f complex subunit 8, found in Chlorokybus atmophyticus (Soil alga).